We begin with the raw amino-acid sequence, 596 residues long: Sodium/mannose cotransporter SLC5A10 (596 aa).

At 1-15 (MAANSTSDLHTPGTQ) the chain is on the extracellular side. Asn-4 carries an N-linked (GlcNAc...) asparagine glycan. The helical transmembrane segment at 16–36 (LSVADIIVITVYFALNVAVGI) threads the bilayer. Residues 37-72 (WSSCRASRNTVNGYFLAGRDMTWWPIGASLFASSEG) lie on the Cytoplasmic side of the membrane. Residues 73 to 93 (SGLFIGLAGSGAAGGLAVAGF) form a helical membrane-spanning segment. Residues 94 to 99 (EWNATY) are Extracellular-facing. A glycan (N-linked (GlcNAc...) asparagine) is linked at Asn-96. A helical transmembrane segment spans residues 100–120 (VLLALAWVFVPIYISSEIVTL). At 121–149 (PEYIQKRYGGQRIRMYLSVLSLLLSVFTK) the chain is on the cytoplasmic side. Ser-141 and Ser-145 each carry phosphoserine. Thr-148 is modified (phosphothreonine). Residues 150 to 170 (ISLDLYAGALFVHICLGWNFY) traverse the membrane as a helical segment. The Extracellular segment spans residues 171-173 (LST). Residues 174-194 (ILTLGITALYTIAGGLAAVIY) traverse the membrane as a helical segment. Residues 195-200 (TDALQT) lie on the Cytoplasmic side of the membrane. Residues 201–221 (LIMVVGAVILTIKAFDQIGGY) form a helical membrane-spanning segment. The Extracellular segment spans residues 222–264 (GQLEAAYAQAIPSRTIANTTCHLPRTDAMHMFRDPHTGDLPWT). The chain crosses the membrane as a helical span at residues 265–285 (GMTFGLTIMATWYWCTDQVIV). The Cytoplasmic segment spans residues 286-300 (QRSLSARDLNHAKAG). The helical transmembrane segment at 301-321 (SILASYLKMLPMGLIIMPGMI) threads the bilayer. Residues 322–355 (SRALFPDDVGCVVPSECLRACGAEVGCSNIAYPK) lie on the Extracellular side of the membrane. Residues 356-376 (LVMELMPIGLRGLMIAVMLAA) traverse the membrane as a helical segment. Residues 377-409 (LMSSLTSIFNSSSTLFTMDIWRRLRPRSGEREL) are Cytoplasmic-facing. The chain crosses the membrane as a helical span at residues 410 to 430 (LLVGRLVIVALIGVSVAWIPV). At 431–443 (LQDSNSGQLFIYM) the chain is on the extracellular side. Residues 444–464 (QSVTSSLAPPVTAVFVLGVFW) traverse the membrane as a helical segment. Over 465–471 (RRANEQG) the chain is Cytoplasmic. The helical transmembrane segment at 472–492 (AFWGLIAGLVVGATRLVLEFL) threads the bilayer. Topologically, residues 493-513 (NPAPPCGEPDTRPAVLGSIHY) are extracellular. A helical transmembrane segment spans residues 514–534 (LHFAVALFALSGAVVVAGSLL). The Cytoplasmic portion of the chain corresponds to 535 to 575 (TPPPQSVQIENLTWWTLAQDVPLGTKAGDGQTPQKHAFWAR). A helical membrane pass occupies residues 576-596 (VCGFNAILLMCVNIFFYAYFA).

The protein belongs to the sodium:solute symporter (SSF) (TC 2.A.21) family. As to expression, predominantly expressed at high levels in kidney. Very low expression is detected in testes. In terms of tissue distribution, expressed in kidney. The most abundant isoform expressed in kidney.

It localises to the apical cell membrane. It catalyses the reaction D-mannose(out) + Na(+)(out) = D-mannose(in) + Na(+)(in). The catalysed reaction is D-fructopyranose(out) + Na(+)(out) = D-fructopyranose(in) + Na(+)(in). Its activity is regulated as follows. Inhibited by phlorizin. Electrogenic Na+-coupled sugar symporter that actively transports D-mannose or D-fructose at the plasma membrane, with a Na+ to sugar coupling ratio of 1:1. Transporter activity is driven by a transmembrane Na+ electrochemical gradient set by the Na+/K+ pump. Exclusively recognizes sugar substrates having a pyranose ring with an axial hydroxyl group on carbon 2. Has likely evolved to enable renal reabsorption of D-mannose, an important constituent of oligosaccharide chains of glycoproteins. Contributes to dietary D-fructose reabsorption from glomerular filtrate across the brush border of the kidney. Functionally, appears to have no transporter activity. This Homo sapiens (Human) protein is Sodium/mannose cotransporter SLC5A10 (SLC5A10).